The sequence spans 931 residues: Protein translocase subunit SecA (931 aa).

Residues Gln87, 105 to 109 (GEGKT), and Asp515 each bind ATP. Zn(2+) contacts are provided by Cys915, Cys917, Cys926, and His927.

It belongs to the SecA family. In terms of assembly, monomer and homodimer. Part of the essential Sec protein translocation apparatus which comprises SecA, SecYEG and auxiliary proteins SecDF-YajC and YidC. It depends on Zn(2+) as a cofactor.

The protein resides in the cell inner membrane. It localises to the cytoplasm. It catalyses the reaction ATP + H2O + cellular proteinSide 1 = ADP + phosphate + cellular proteinSide 2.. Part of the Sec protein translocase complex. Interacts with the SecYEG preprotein conducting channel. Has a central role in coupling the hydrolysis of ATP to the transfer of proteins into and across the cell membrane, serving both as a receptor for the preprotein-SecB complex and as an ATP-driven molecular motor driving the stepwise translocation of polypeptide chains across the membrane. The protein is Protein translocase subunit SecA of Burkholderia ambifaria (strain ATCC BAA-244 / DSM 16087 / CCUG 44356 / LMG 19182 / AMMD) (Burkholderia cepacia (strain AMMD)).